A 229-amino-acid polypeptide reads, in one-letter code: C-&gt;U-editing enzyme APOBEC-1 (229 aa).

A CMP/dCMP-type deaminase domain is found at 10 to 134; sequence VDPTLRRRIE…QRNRQGLRDL (125 aa). H61 serves as a coordination point for Zn(2+). The active-site Proton donor is the E63. Residues C93 and C96 each contribute to the Zn(2+) site.

Belongs to the cytidine and deoxycytidylate deaminase family. As to quaternary structure, homodimer. Interacts with A1CF; form an mRNA editing complex. Interacts with RBM47; form an mRNA editing complex. Found in a complex with CELF2/CUGBP2 and A1CF. Interacts with HNRPAB. Interacts with SYNCRIP. Requires Zn(2+) as cofactor.

It localises to the cytoplasm. Its subcellular location is the nucleus. It carries out the reaction a cytidine in mRNA + H2O + H(+) = a uridine in mRNA + NH4(+). It catalyses the reaction cytidine(6666) in apoB mRNA + H2O + H(+) = uridine(6666) in apoB mRNA + NH4(+). Its function is as follows. Cytidine deaminase catalyzing the cytidine to uridine postranscriptional editing of a variety of mRNAs. Form complexes with cofactors that confer differential editing activity and selectivity. Responsible for the postranscriptional editing of a CAA codon for Gln to a UAA codon for stop in the apolipoprotein B mRNA. Also involved in CGA (Arg) to UGA (Stop) editing in the NF1 mRNA. May also play a role in the epigenetic regulation of gene expression by participating in DNA demethylation. The chain is C-&gt;U-editing enzyme APOBEC-1 from Mesocricetus auratus (Golden hamster).